A 784-amino-acid polypeptide reads, in one-letter code: Ubiquitin carboxyl-terminal hydrolase 1 (784 aa).

Disordered regions lie at residues 1 to 21 (MPGVIPSESNGLSRGSPSKKN) and 34 to 56 (KRALDFTDSQENEEKTSEYRGSE). Positions 7–16 (SESNGLSRGS) are enriched in polar residues. Residues S16 and S42 each carry the phosphoserine modification. Residues 45-56 (NEEKTSEYRGSE) are compositionally biased toward basic and acidic residues. Position 67 is a phosphoserine (S67). Residues 81-784 (VGLNNLGNTC…TPYLLFYKKL (704 aa)) enclose the USP domain. C90 acts as the Nucleophile in catalysis. Composition is skewed to basic and acidic residues over residues 233-243 (VEEQSLQKEET) and 252-264 (DSMRNTEDVKEQL). Disordered stretches follow at residues 233-342 (VEEQ…INWL) and 362-414 (TTNQ…KSGN). Residue S474 is modified to Phosphoserine. H592 acts as the Proton acceptor in catalysis. The disordered stretch occupies residues 684–725 (NPDKVVGTPFTDNRNSETNDTTNGTHESDRNKESSDQTGVNM). Polar residues predominate over residues 693–708 (FTDNRNSETNDTTNGT). The segment covering 709–718 (HESDRNKESS) has biased composition (basic and acidic residues). Residue S767 is modified to Phosphoserine.

This sequence belongs to the peptidase C19 family. Interacts with FANCD2 and PCNA. Interacts with WDR48. Interacts with ATAD5; the interaction regulates USP1-mediated PCNA deubiquitination. In terms of processing, autocatalytic cleavage of USP1 following UV irradiation inactivates it, leading to an increase in ubiquitinated PCNA, recruitment of POLH and translesion synthesis. Post-translationally, ubiquitinated by the CRL2(KLHDC2) complex following autocatalytic cleavage, leading to its degradation: the CRL2(KLHDC2) complex recognizes the diglycine (Gly-Gly) at the C-terminus.

It is found in the nucleus. The enzyme catalyses Thiol-dependent hydrolysis of ester, thioester, amide, peptide and isopeptide bonds formed by the C-terminal Gly of ubiquitin (a 76-residue protein attached to proteins as an intracellular targeting signal).. Functionally, negative regulator of DNA damage repair which specifically deubiquitinates monoubiquitinated FANCD2. Also involved in PCNA-mediated translesion synthesis (TLS) by deubiquitinating monoubiquitinated PCNA. Has almost no deubiquitinating activity by itself and requires the interaction with WDR48 to have a high activity. In Mus musculus (Mouse), this protein is Ubiquitin carboxyl-terminal hydrolase 1.